A 147-amino-acid chain; its full sequence is uncharacterized protein (147 aa).

Positions 1–137 (MRDNTIGSLI…LYELMTKVHK (137 aa)) constitute an HTH marR-type domain. The H-T-H motif DNA-binding region spans 53–76 (QMELAEKVTVTQGGISRMLTRLEK).

This is an uncharacterized protein from Bacillus thuringiensis subsp. konkukian (strain 97-27).